Reading from the N-terminus, the 233-residue chain is Purine nucleoside phosphorylase DeoD-type (233 aa).

His-4 is an a purine D-ribonucleoside binding site. Phosphate-binding positions include Gly-20, Arg-24, Arg-43, and 87–90; that span reads RIGT. Residues 179–181 and 203–204 each bind a purine D-ribonucleoside; these read EME and SD. Catalysis depends on Asp-204, which acts as the Proton donor.

It belongs to the PNP/UDP phosphorylase family. Homohexamer; trimer of homodimers.

The catalysed reaction is a purine D-ribonucleoside + phosphate = a purine nucleobase + alpha-D-ribose 1-phosphate. It carries out the reaction a purine 2'-deoxy-D-ribonucleoside + phosphate = a purine nucleobase + 2-deoxy-alpha-D-ribose 1-phosphate. In terms of biological role, catalyzes the reversible phosphorolytic breakdown of the N-glycosidic bond in the beta-(deoxy)ribonucleoside molecules, with the formation of the corresponding free purine bases and pentose-1-phosphate. This is Purine nucleoside phosphorylase DeoD-type from Helicobacter pylori (strain P12).